The following is a 274-amino-acid chain: Bis(5'-nucleosyl)-tetraphosphatase, symmetrical (274 aa).

The protein belongs to the Ap4A hydrolase family.

The enzyme catalyses P(1),P(4)-bis(5'-adenosyl) tetraphosphate + H2O = 2 ADP + 2 H(+). Its function is as follows. Hydrolyzes diadenosine 5',5'''-P1,P4-tetraphosphate to yield ADP. The protein is Bis(5'-nucleosyl)-tetraphosphatase, symmetrical of Shewanella sediminis (strain HAW-EB3).